Consider the following 406-residue polypeptide: Terminal uridylyltransferase 7 (406 aa).

Residues 1–15 (MNVAKREFIRGMMAH) constitute a mitochondrion transit peptide. UTP contacts are provided by residues serine 54 and 64–65 (SD). Residues aspartate 65 and aspartate 67 each contribute to the Mg(2+) site. Residues 138 to 142 (GVENS), lysine 164, lysine 168, and 181 to 183 (NSF) contribute to the UTP site.

Belongs to the DNA polymerase type-B-like family. As to quaternary structure, component of the mitochondrial RNA editing core complex-like (RECC-like), also known as the editosome-like complex; only a small proportion of MEAT1 associates with the complex. Interacts with RNA-editing ligase REL1. It depends on Mg(2+) as a cofactor.

The protein localises to the mitochondrion matrix. It catalyses the reaction RNA(n) + UTP = RNA(n)-3'-uridine ribonucleotide + diphosphate. In terms of biological role, terminal uridylyltransferase which, as part of the mitochondrial RNA editing core-like complex (RECC-like), is involved in the post-transcriptional editing of mitochondrial RNA, a process involving the addition and deletion of uridine (U) nucleotides in the pre-mRNA. Specifically, catalyzes the addition of U to single-stranded RNA with a preference for a 3'-terminal U and adds the number of Us specified by a guide RNA (gRNA) to precleaved double-stranded RNA editing substrates. Essential for insect and bloodstream developmental forms viability. The sequence is that of Terminal uridylyltransferase 7 from Trypanosoma brucei brucei.